The chain runs to 204 residues: Lymphotoxin-alpha (204 aa).

A signal peptide spans 1 to 33 (MTPPGRLYLLRVRSAPVLLLLGLLLGLPPGAQG). Residues 62-204 (PAAHLIGDPS…SSVFFGAFAL (143 aa)) form the THD domain. A glycan (N-linked (GlcNAc...) asparagine) is linked at N95. C119 and C155 are oxidised to a cystine.

This sequence belongs to the tumor necrosis factor family. In terms of assembly, homotrimer, and heterotrimer of either two LTB and one LTA subunits or (less prevalent) two LTA and one LTB subunits. Interacts with TNFRSF14.

The protein localises to the secreted. Its subcellular location is the membrane. In terms of biological role, cytokine that in its homotrimeric form binds to TNFRSF1A/TNFR1, TNFRSF1B/TNFBR and TNFRSF14/HVEM. In its heterotrimeric form with LTB binds to TNFRSF3/LTBR. Lymphotoxin is produced by lymphocytes and is cytotoxic for a wide range of tumor cells in vitro and in vivo. This Canis lupus familiaris (Dog) protein is Lymphotoxin-alpha (LTA).